Consider the following 196-residue polypeptide: MIILAALLAYILGSVPFGYLTSKYLWGVDITKKGSGNIGATNVYRNLGPYPGAITAIGDVGKGMLAVYIGSLLAGERGALVASFFVVIGHAYSIFLKFHGGKIVATTFGVLIMTSIKVTVVVFFIWLTVMLISRYVSLGSIVCGLSIPLIMLLFGLDLSYIYLGIFLAVMIFYRHRDNIKRLRSGTENKIGTRKNG.

5 helical membrane-spanning segments follow: residues 1 to 21 (MIIL…GYLT), 53 to 73 (AITA…GSLL), 78 to 98 (GALV…FLKF), 112 to 132 (IMTS…VMLI), and 152 to 172 (LLFG…VMIF).

It belongs to the PlsY family. Probably interacts with PlsX.

The protein localises to the cell membrane. It catalyses the reaction an acyl phosphate + sn-glycerol 3-phosphate = a 1-acyl-sn-glycero-3-phosphate + phosphate. It functions in the pathway lipid metabolism; phospholipid metabolism. Its function is as follows. Catalyzes the transfer of an acyl group from acyl-phosphate (acyl-PO(4)) to glycerol-3-phosphate (G3P) to form lysophosphatidic acid (LPA). This enzyme utilizes acyl-phosphate as fatty acyl donor, but not acyl-CoA or acyl-ACP. The polypeptide is Glycerol-3-phosphate acyltransferase (Carboxydothermus hydrogenoformans (strain ATCC BAA-161 / DSM 6008 / Z-2901)).